A 196-amino-acid chain; its full sequence is Thymidine kinase (196 aa).

Residues glycine 9 to serine 16 and aspartate 85 to glutamine 88 contribute to the ATP site. The active-site Proton acceptor is glutamate 86. Zn(2+) contacts are provided by cysteine 143, cysteine 146, cysteine 180, and histidine 183.

Belongs to the thymidine kinase family. As to quaternary structure, homotetramer.

The protein localises to the cytoplasm. It carries out the reaction thymidine + ATP = dTMP + ADP + H(+). The sequence is that of Thymidine kinase from Streptococcus thermophilus (strain CNRZ 1066).